The sequence spans 979 residues: Pro-apoptotic serine protease NMA111 (979 aa).

Residues Met1–Leu20 are disordered. The segment at Val65–Leu255 is serine protease. Catalysis depends on charge relay system residues His103, Asp134, and Ser217. 2 PDZ domains span residues Trp273–Thr361 and Ser750–Gly836.

The protein belongs to the peptidase S1C family.

The protein resides in the nucleus. Functionally, nuclear serine protease which mediates apoptosis. This Candida glabrata (strain ATCC 2001 / BCRC 20586 / JCM 3761 / NBRC 0622 / NRRL Y-65 / CBS 138) (Yeast) protein is Pro-apoptotic serine protease NMA111 (NMA111).